A 153-amino-acid polypeptide reads, in one-letter code: Aspartate carbamoyltransferase regulatory chain (153 aa).

4 residues coordinate Zn(2+): C109, C114, C138, and C141.

It belongs to the PyrI family. Contains catalytic and regulatory chains. The cofactor is Zn(2+).

Its function is as follows. Involved in allosteric regulation of aspartate carbamoyltransferase. The sequence is that of Aspartate carbamoyltransferase regulatory chain from Salmonella arizonae (strain ATCC BAA-731 / CDC346-86 / RSK2980).